Reading from the N-terminus, the 520-residue chain is Glucose starvation modulator protein 1 (520 aa).

The zn(2)-C6 fungal-type DNA-binding region spans 20-48; the sequence is CVFCHEKHLQCSNERPCKNCVKRGLAHEC. The PAS domain maps to 376–445; that stretch reads DYEKLSQLNS…FRLFKTVAVG (70 aa).

The protein belongs to the ERT1/acuK family.

It localises to the nucleus. In terms of biological role, transcription factor which regulates nonfermentable carbon utilization. The sequence is that of Glucose starvation modulator protein 1 (GSM1) from Scheffersomyces stipitis (strain ATCC 58785 / CBS 6054 / NBRC 10063 / NRRL Y-11545) (Yeast).